A 234-amino-acid chain; its full sequence is Enolase-phosphatase E1 (234 aa).

Mg(2+) is bound by residues D10 and E12. Substrate is bound by residues 125 to 126 and K162; that span reads SS. D188 contacts Mg(2+).

It belongs to the HAD-like hydrolase superfamily. MasA/MtnC family. Monomer. Requires Mg(2+) as cofactor.

The protein resides in the cytoplasm. It localises to the nucleus. The enzyme catalyses 5-methylsulfanyl-2,3-dioxopentyl phosphate + H2O = 1,2-dihydroxy-5-(methylsulfanyl)pent-1-en-3-one + phosphate. Its pathway is amino-acid biosynthesis; L-methionine biosynthesis via salvage pathway; L-methionine from S-methyl-5-thio-alpha-D-ribose 1-phosphate: step 3/6. It functions in the pathway amino-acid biosynthesis; L-methionine biosynthesis via salvage pathway; L-methionine from S-methyl-5-thio-alpha-D-ribose 1-phosphate: step 4/6. Functionally, bifunctional enzyme that catalyzes the enolization of 2,3-diketo-5-methylthiopentyl-1-phosphate (DK-MTP-1-P) into the intermediate 2-hydroxy-3-keto-5-methylthiopentenyl-1-phosphate (HK-MTPenyl-1-P), which is then dephosphorylated to form the acireductone 1,2-dihydroxy-3-keto-5-methylthiopentene (DHK-MTPene). This chain is Enolase-phosphatase E1 (utr4), found in Neurospora crassa (strain ATCC 24698 / 74-OR23-1A / CBS 708.71 / DSM 1257 / FGSC 987).